The sequence spans 277 residues: Putative phosphoenolpyruvate synthase regulatory protein (277 aa).

157 to 164 serves as a coordination point for ADP; it reads GVSRCGKT.

This sequence belongs to the pyruvate, phosphate/water dikinase regulatory protein family. PSRP subfamily.

It carries out the reaction [pyruvate, water dikinase] + ADP = [pyruvate, water dikinase]-phosphate + AMP + H(+). It catalyses the reaction [pyruvate, water dikinase]-phosphate + phosphate + H(+) = [pyruvate, water dikinase] + diphosphate. Its function is as follows. Bifunctional serine/threonine kinase and phosphorylase involved in the regulation of the phosphoenolpyruvate synthase (PEPS) by catalyzing its phosphorylation/dephosphorylation. This is Putative phosphoenolpyruvate synthase regulatory protein from Citrobacter koseri (strain ATCC BAA-895 / CDC 4225-83 / SGSC4696).